We begin with the raw amino-acid sequence, 339 residues long: Beta-ketoacyl-[acyl-carrier-protein] synthase III (339 aa).

Residues cysteine 121 and histidine 257 contribute to the active site. Residues 258–262 are ACP-binding; that stretch reads QANLR. Asparagine 288 is an active-site residue.

The protein belongs to the thiolase-like superfamily. FabH family. In terms of assembly, homodimer.

The protein resides in the cytoplasm. It catalyses the reaction malonyl-[ACP] + propanoyl-CoA + H(+) = 3-oxopentanoyl-[ACP] + CO2 + CoA. The enzyme catalyses 2-methylpropanoyl-CoA + malonyl-[ACP] + H(+) = 4-methyl-3-oxopentanoyl-[ACP] + CO2 + CoA. It carries out the reaction malonyl-[ACP] + acetyl-CoA + H(+) = 3-oxobutanoyl-[ACP] + CO2 + CoA. The catalysed reaction is butanoyl-CoA + malonyl-[ACP] + H(+) = 3-oxohexanoyl-[ACP] + CO2 + CoA. Its pathway is lipid metabolism; fatty acid biosynthesis. Functionally, catalyzes the condensation reaction of fatty acid synthesis by the addition to an acyl acceptor of two carbons from malonyl-ACP. Catalyzes the first condensation reaction which initiates fatty acid synthesis and may therefore play a role in governing the total rate of fatty acid production. Possesses both acetoacetyl-ACP synthase and acetyl transacylase activities. Propionyl-CoA and isobutyryl-CoA were the two most preferred substrates, although acetyl-CoA and butyryl-CoA could also be accepted and elongated. Involved in the biosynthesis of R1128 polyketide. This chain is Beta-ketoacyl-[acyl-carrier-protein] synthase III, found in Streptomyces lividans.